The primary structure comprises 108 residues: UPF0102 protein Sama_3355 (108 aa).

It belongs to the UPF0102 family.

This chain is UPF0102 protein Sama_3355, found in Shewanella amazonensis (strain ATCC BAA-1098 / SB2B).